Consider the following 433-residue polypeptide: Glucoside xylosyltransferase 1 (433 aa).

At 1-6 (MRRFAR) the chain is on the cytoplasmic side. The chain crosses the membrane as a helical; Signal-anchor for type II membrane protein span at residues 7 to 29 (VALLFLGCGVCSLLYGVSQLALS). Over 30 to 433 (LEQEAGGARQ…DLSVRRSKGS (404 aa)) the chain is Lumenal. Positions 39–64 (QRQARESAAPGGGRQAGSADGGEEGA) are disordered. N-linked (GlcNAc...) asparagine glycosylation is found at Asn-69, Asn-166, Asn-271, Asn-305, and Asn-380.

Belongs to the glycosyltransferase 8 family.

It is found in the membrane. The catalysed reaction is 3-O-(beta-D-glucosyl)-L-seryl-[EGF-like domain protein] + UDP-alpha-D-xylose = 3-O-[alpha-D-xylosyl-(1-&gt;3)-beta-D-glucosyl]-L-seryl-[EGF-like domain protein] + UDP + H(+). Glycosyltransferase which elongates the O-linked glucose attached to EGF-like repeats in the extracellular domain of Notch proteins by catalyzing the addition of xylose. The chain is Glucoside xylosyltransferase 1 (GXYLT1) from Gallus gallus (Chicken).